The primary structure comprises 179 residues: Natural killer cells antigen CD94 (179 aa).

Topologically, residues 1–10 (MAVFKTTLWR) are cytoplasmic. A helical; Signal-anchor for type II membrane protein membrane pass occupies residues 11-31 (LISGTLGIICLSLMATLGILL). At 32–179 (KNSFTKLSVE…NRYICKQQLI (148 aa)) the chain is on the extracellular side. 2 disulfides stabilise this stretch: Cys58–Cys70 and Cys61–Cys72. The region spanning 68 to 175 (YRCNCYFISS…CETKNRYICK (108 aa)) is the C-type lectin domain. Residues Asn83 and Asn132 are each glycosylated (N-linked (GlcNAc...) asparagine). Cystine bridges form between Cys89–Cys174 and Cys152–Cys166.

In terms of assembly, can form disulfide-bonded heterodimer with NKG2 family members KLRC1 and KLRC2. KLRD1-KLRC1 heterodimer interacts with peptide-bound MHC-E-B2M heterotrimeric complex. KLRD1 plays a prominent role in directly interacting with MHC-E. KLRD1-KLRC1 interacts with much higher affinity with peptide-bound MHC-E-B2M than KLRD1-KLRC2. Interacts with the adapter protein TYROBP/DAP12; this interaction is required for cell surface expression and cell activation. In terms of tissue distribution, natural killer cells.

The protein resides in the cell membrane. Its function is as follows. Immune receptor involved in self-nonself discrimination. In complex with KLRC1 or KLRC2 on cytotoxic and regulatory lymphocyte subsets, recognizes non-classical major histocompatibility (MHC) class Ib molecule MHC-E loaded with self-peptides derived from the signal sequence of classical MHC class Ia and non-classical MHC class Ib molecules. Enables cytotoxic cells to monitor the expression of MHC class I molecules in healthy cells and to tolerate self. Primarily functions as a ligand binding subunit as it lacks the capacity to signal. KLRD1-KLRC1 acts as an immune inhibitory receptor. Key inhibitory receptor on natural killer (NK) cells that regulates their activation and effector functions. Dominantly counteracts T cell receptor signaling on a subset of memory/effector CD8-positive T cells as part of an antigen-driven response to avoid autoimmunity. On intraepithelial CD8-positive gamma-delta regulatory T cells triggers TGFB1 secretion, which in turn limits the cytotoxic programming of intraepithelial CD8-positive alpha-beta T cells, distinguishing harmless from pathogenic antigens. In MHC-E-rich tumor microenvironment, acts as an immune inhibitory checkpoint and may contribute to progressive loss of effector functions of NK cells and tumor-specific T cells, a state known as cell exhaustion. Upon MHC-E-peptide binding, transmits intracellular signals through KLRC1 immunoreceptor tyrosine-based inhibition motifs (ITIMs) by recruiting INPP5D/SHIP-1 and INPPL1/SHIP-2 tyrosine phosphatases to ITIMs, and ultimately opposing signals transmitted by activating receptors through dephosphorylation of proximal signaling molecules. Functionally, KLRD1-KLRC2 acts as an immune activating receptor. On cytotoxic lymphocyte subsets recognizes MHC-E loaded with signal sequence-derived peptides from non-classical MHC class Ib MHC-G molecules, likely playing a role in the generation and effector functions of adaptive NK cells and in maternal-fetal tolerance during pregnancy. Regulates the effector functions of terminally differentiated cytotoxic lymphocyte subsets, and in particular may play a role in adaptive NK cell response to viral infection. Upon MHC-E-peptide binding, transmits intracellular signals via the adapter protein TYROBP/DAP12, triggering the phosphorylation of proximal signaling molecules and cell activation. The protein is Natural killer cells antigen CD94 (KLRD1) of Macaca mulatta (Rhesus macaque).